We begin with the raw amino-acid sequence, 335 residues long: Aspartate carbamoyltransferase catalytic subunit (335 aa).

Arginine 54 and threonine 55 together coordinate carbamoyl phosphate. Lysine 82 contacts L-aspartate. The carbamoyl phosphate site is built by arginine 104, histidine 134, and glutamine 137. 2 residues coordinate L-aspartate: arginine 177 and arginine 232. Carbamoyl phosphate is bound by residues glycine 277 and proline 278.

It belongs to the aspartate/ornithine carbamoyltransferase superfamily. ATCase family. As to quaternary structure, heterododecamer (2C3:3R2) of six catalytic PyrB chains organized as two trimers (C3), and six regulatory PyrI chains organized as three dimers (R2).

The catalysed reaction is carbamoyl phosphate + L-aspartate = N-carbamoyl-L-aspartate + phosphate + H(+). The protein operates within pyrimidine metabolism; UMP biosynthesis via de novo pathway; (S)-dihydroorotate from bicarbonate: step 2/3. In terms of biological role, catalyzes the condensation of carbamoyl phosphate and aspartate to form carbamoyl aspartate and inorganic phosphate, the committed step in the de novo pyrimidine nucleotide biosynthesis pathway. This chain is Aspartate carbamoyltransferase catalytic subunit, found in Paenarthrobacter aurescens (strain TC1).